A 562-amino-acid chain; its full sequence is Arginine--tRNA ligase (562 aa).

The 'HIGH' region motif lies at 129–139; it reads ANPTGPLHVGH.

This sequence belongs to the class-I aminoacyl-tRNA synthetase family. As to quaternary structure, monomer.

The protein localises to the cytoplasm. The enzyme catalyses tRNA(Arg) + L-arginine + ATP = L-arginyl-tRNA(Arg) + AMP + diphosphate. This Stenotrophomonas maltophilia (strain K279a) protein is Arginine--tRNA ligase.